Here is a 284-residue protein sequence, read N- to C-terminus: Nucleotide-binding protein PP_0949 (284 aa).

G8 to S15 lines the ATP pocket. D60–N63 serves as a coordination point for GTP.

Belongs to the RapZ-like family.

Its function is as follows. Displays ATPase and GTPase activities. The chain is Nucleotide-binding protein PP_0949 from Pseudomonas putida (strain ATCC 47054 / DSM 6125 / CFBP 8728 / NCIMB 11950 / KT2440).